The primary structure comprises 443 residues: 26S proteasome regulatory subunit 4 homolog A (443 aa).

Disordered stretches follow at residues 1-55 (MGQG…LPTV) and 87-108 (RLKP…LRGT). Composition is skewed to basic and acidic residues over residues 12–28 (QGDR…KKFE) and 87–106 (RLKP…DDLR). 229 to 236 (GEPGTGKT) contributes to the ATP binding site. Glycyl lysine isopeptide (Lys-Gly) (interchain with G-Cter in ubiquitin) cross-links involve residues Lys-296 and Lys-433.

The protein belongs to the AAA ATPase family. Component of the 19S regulatory particle (RP/PA700) base subcomplex of the 26S proteasome. The 26S proteasome is composed of a core protease (CP), known as the 20S proteasome, capped at one or both ends by the 19S regulatory particle (RP/PA700). The RP/PA700 complex is composed of at least 17 different subunits in two subcomplexes, the base and the lid, which form the portions proximal and distal to the 20S proteolytic core, respectively. Required for innate immunity. Interacts with UNI. Preferentially expressed in the root and shoot apical meristem.

The protein resides in the cytoplasm. It localises to the P-body. Its subcellular location is the nucleus. Functionally, the 26S protease is involved in the ATP-dependent degradation of ubiquitinated proteins. The regulatory (or ATPase) complex confers ATP dependency and substrate specificity to the 26S complex. Interacts with transit peptides of proteins targeted to the chloroplast, and may be involved in the degradation of unimported plastid protein precursors. Is required for the maintenance of postembryonic root and shoot meristems. Has a specific role in the regulation of organs size. Acts redundantly with RPT2B in the regulation of gametogenesis. With RPT2B plays a critical role in 26S proteasome assembly. Acts as an upstream signaling component for inducing both defense and morphological phenotypes in the constitutive active uni-1D mutant. Acts as a negative regulator of endoreduplication in trichome cells. May function after the completion of the third endoreduplication step (8C to 16C) mediated by RHL1. Acts as a negative regulator of transcriptional gene silencing (TGS) at specific endogenous genes through DNA methylation. Promotes post-transcriptional gene silencing (PTGS) by limiting the degradation of transgene aberrant RNAs by the RNA quality control (RQC) machinery, thus favoring their entry into cytoplasmic siRNA bodies where they can trigger PTGS. Involved in tolerance to zinc deficiency, possibly through alleviation of oxidative stresses or processing of poly-ubiquitinated proteins. Required for resistance to the fungal pathogen Golovinomyces cichoracearum. This chain is 26S proteasome regulatory subunit 4 homolog A, found in Arabidopsis thaliana (Mouse-ear cress).